We begin with the raw amino-acid sequence, 179 residues long: Ribosome-recycling factor (179 aa).

This sequence belongs to the RRF family.

The protein localises to the cytoplasm. Responsible for the release of ribosomes from messenger RNA at the termination of protein biosynthesis. May increase the efficiency of translation by recycling ribosomes from one round of translation to another. This is Ribosome-recycling factor from Chlamydia trachomatis serovar D (strain ATCC VR-885 / DSM 19411 / UW-3/Cx).